Consider the following 249-residue polypeptide: General transcription factor IIF subunit 2 (249 aa).

An N-acetylalanine modification is found at A2. N6-acetyllysine occurs at positions 22, 33, and 137. Residue S142 is modified to Phosphoserine. Positions 227 and 229 each coordinate DNA. S248 carries the phosphoserine modification.

Belongs to the TFIIF beta subunit family. As to quaternary structure, heterodimer of an alpha and a beta subunit. Interacts with HTATSF1 and GPBP1. Interacts with URI1. Interacts with GTF2B (via N-terminus); this interaction is inhibited in presence of GTF2F1. Part of TBP-based Pol II pre-initiation complex (PIC), in which Pol II core assembles with general transcription factors and other specific initiation factors including GTF2E1, GTF2E2, GTF2F1, GTF2F2, TCEA1, ERCC2, ERCC3, GTF2H2, GTF2H3, GTF2H4, GTF2H5, GTF2A1, GTF2A2, GTF2B and TBP; this large multi-subunit PIC complex mediates DNA unwinding and targets Pol II core to the transcription start site where the first phosphodiester bond forms.

The protein resides in the nucleus. Its function is as follows. TFIIF is a general transcription initiation factor that binds to RNA polymerase II and helps to recruit it to the initiation complex in collaboration with TFIIB. This is General transcription factor IIF subunit 2 (GTF2F2) from Homo sapiens (Human).